Consider the following 137-residue polypeptide: MNFVLSDVADAEAEKAIRDPLVAYNLARFGESDKRDLNITIRNDDNSVTGGLVGHTARGWLYVQLLFVPEAMRGQGIAPKLLAMAEEEARKRGCMGAYIDTMNPDALRTYERYGFTKIGSLGPLSSGQSITWLEKRF.

The N-acetyltransferase domain maps to 1–137; it reads MNFVLSDVAD…QSITWLEKRF (137 aa). CoA contacts are provided by residues 66 to 68, G74, and 108 to 110; these read LFV and RTY.

In terms of biological role, catalyzes the transfer of an acetyl group from acetyl coenzyme A (AcCoA) to an acceptor substrate and releases both CoA and the acetylated product. It prefers glucosamine 6-phosphate or dopamine. It can also use the thialysine, N(8)-acetylspermidine, chloramphenicol, puromycin, polymyxin B, and 4-aminobutyrate ethyl ester. This is Acetyltransferase Atu2258 from Agrobacterium fabrum (strain C58 / ATCC 33970) (Agrobacterium tumefaciens (strain C58)).